The sequence spans 108 residues: Con-Ins K1 (108 aa).

The N-terminal stretch at 1 to 24 (MTTSSYFLLVALGLLLYVCQSSFG) is a signal peptide. The propeptide occupies 25–28 (SPHT). Cystine bridges form between Cys-41-Cys-90, Cys-53-Cys-103, and Cys-89-Cys-94. At Glu-44 the chain carries 4-carboxyglutamate. A propeptide spans 57–83 (RKRRGFPSMLKARAKRNEAFLLQRDGR) (c peptide). The residue at position 87 (Glu-87) is a 4-carboxyglutamate. Position 107 is a glutamine amide (Gln-107).

This sequence belongs to the insulin family. In terms of assembly, heterodimer of A and B chains; disulfide-linked. Expressed by the venom gland.

Its subcellular location is the secreted. In terms of biological role, this venom insulin, from a fish-hunting cone snail, facilitates prey capture by rapidly inducing hypoglycemic shock. It is one of the smallest known insulin found in nature and lacks the C-terminal segment of the B chain that, in human insulin, mediates engagement of the insulin receptor (INSR) and assembly of the hormone's hexameric storage form. Despite lacking this segment, it both binds and activates human insulin receptor (long isoform (HIR-B)) with a moderate potency (EC(50)=30.45 nM). In vivo, intraperitoneal injection of this peptide into zebrafish lowers blood glucose with a lower potency than human insulin. In addition, when applied to water, this peptide reduces overall locomotor activity of zebrafish larvae, observed as a significant decrease in the percentage of time spent swimming and movement frequency. When tested on a mouse model of diabetes, this insulin also lowers blood glucose with a 20-fold lower potency than human insulin. This is Con-Ins K1 from Conus kinoshitai (Kinoshita's cone).